A 1179-amino-acid polypeptide reads, in one-letter code: Protein turtle homolog A (1179 aa).

The N-terminal stretch at 1–20 (MIWCLRLTVLSLIISQGADG) is a signal peptide. At 21–734 (RRKPEVVSVV…TQLPGLLPQP (714 aa)) the chain is on the extracellular side. 5 consecutive Ig-like domains span residues 24 to 124 (PEVV…DFAN), 136 to 216 (PQFQ…GSIT), 226 to 318 (PPVI…AYLT), 322 to 410 (PAQV…SPVT), and 418 to 502 (PAFI…TNVY). Cystine bridges form between cysteine 41/cysteine 108 and cysteine 158/cysteine 206. Residues asparagine 188, asparagine 239, and asparagine 256 are each glycosylated (N-linked (GlcNAc...) asparagine). 3 cysteine pairs are disulfide-bonded: cysteine 248/cysteine 301, cysteine 344/cysteine 395, and cysteine 440/cysteine 486. Fibronectin type-III domains are found at residues 507-611 (SPHV…TTPA) and 623-718 (PLSP…TSGL). 2 N-linked (GlcNAc...) asparagine glycosylation sites follow: asparagine 513 and asparagine 524. Residues 735–755 (VLAGVVGGVCFLGVAVLVSIL) form a helical membrane-spanning segment. The Cytoplasmic portion of the chain corresponds to 756–1179 (AACLMNRRRA…ISYPEQATLL (424 aa)). A disordered region spans residues 767–807 (RRHRKRLRQDPPLIFSPRGKSGSHSAPGSGSPDSVTKFKLQ). Residues 785 to 800 (GKSGSHSAPGSGSPDS) show a composition bias toward low complexity. Serine 809 bears the Phosphoserine mark. 3 disordered regions span residues 819–842 (LWGE…PLPL), 942–974 (PPLE…DSPP), and 1016–1079 (APRG…KRRN). Residues 944-954 (LEEPTPAPPPD) show a composition bias toward pro residues. Polar residues predominate over residues 1020–1029 (SLTSQSSGRG). The short motif at 1177–1179 (TLL) is the PDZ-binding element.

This sequence belongs to the immunoglobulin superfamily. Turtle family. As to quaternary structure, interacts with MAGI2 and SHANK1. As to expression, expressed in both cell bodies and dendrites of cortical and hippocampal neurons and also cerebellar Purkinje cells (at protein level).

It is found in the cell membrane. The protein localises to the synapse. Functions in dendrite outgrowth and synapse maturation. This Mus musculus (Mouse) protein is Protein turtle homolog A (Igsf9).